The following is a 350-amino-acid chain: Cell division protein ZipA (350 aa).

Residues 1–6 lie on the Periplasmic side of the membrane; it reads MEDLQL. Residues 7–27 form a helical membrane-spanning segment; it reads VLFVLGAIAIVAVLVHGFWSI. At 28–350 the chain is on the cytoplasmic side; sequence RKQQPRTIKE…QYLARIRANA (323 aa). Disordered stretches follow at residues 36-55, 65-136, and 187-213; these read KEQP…AEGF, VRKL…PSAR, and RVPA…EEPL. Basic and acidic residues-rich tracts occupy residues 65–109 and 116–131; these read VRKL…ESRA and AAHE…HEEP.

This sequence belongs to the ZipA family. Interacts with FtsZ via their C-terminal domains.

It localises to the cell inner membrane. Essential cell division protein that stabilizes the FtsZ protofilaments by cross-linking them and that serves as a cytoplasmic membrane anchor for the Z ring. Also required for the recruitment to the septal ring of downstream cell division proteins. The polypeptide is Cell division protein ZipA (Shewanella amazonensis (strain ATCC BAA-1098 / SB2B)).